A 288-amino-acid polypeptide reads, in one-letter code: Shikimate kinase (288 aa).

ATP is bound at residue 81 to 91 (PVASGLKSSSA).

The protein belongs to the GHMP kinase family. Archaeal shikimate kinase subfamily.

The protein localises to the cytoplasm. It catalyses the reaction shikimate + ATP = 3-phosphoshikimate + ADP + H(+). Its pathway is metabolic intermediate biosynthesis; chorismate biosynthesis; chorismate from D-erythrose 4-phosphate and phosphoenolpyruvate: step 5/7. The polypeptide is Shikimate kinase (Methanothrix thermoacetophila (strain DSM 6194 / JCM 14653 / NBRC 101360 / PT) (Methanosaeta thermophila)).